The following is a 336-amino-acid chain: Phosphate acetyltransferase (336 aa).

It belongs to the phosphate acetyltransferase and butyryltransferase family.

It localises to the cytoplasm. The catalysed reaction is acetyl-CoA + phosphate = acetyl phosphate + CoA. The protein operates within metabolic intermediate biosynthesis; acetyl-CoA biosynthesis; acetyl-CoA from acetate: step 2/2. This is Phosphate acetyltransferase (pta) from Treponema pallidum (strain Nichols).